Consider the following 1585-residue polypeptide: MSPPISPTPPPLQPPFPPTAIARGPDRPDPPPQHQQAAESLVNAAAQHVAPTCPPTSDELPQMEDQATNSSNDSLIPSRQAPDQEETENAITAGTPPDEMEPTKDAQTVRFSSSSPASYSTHEYPTEGINEPRTSSRAPNTASSQMAESSCDFRSSRDIGSIRMGASALVSALNALPWEEDDDSDDGEDDDEFIEPARGSSSTIYERKQRPQTPSTSHGFHPTHTLHFPFRQNAIARRACQPGTTELDYQYATPETSSRRTSAAGSESSSEGEVPLPKGFVSHPNLIVPSGEGEAAAHPDPKLISDRITKEQQIADVEEQAEILRSAEEQEMRLGKEFVPPKSRDSADLNVDAALREGGSEREDVIEEQMQTNEAEKRLTRNEKLAERLMEVFGLEEREEVLEEMKCWLLRSVMLKGYMYLTKRHICFFANMPNENNLLVKSGPLHKKASRSKLNTKFWVVLKNDVLSWYESTSDPYFPKGNISLQYCHSCDAVSGTRFKVRTSERNYTFTADTESSRDEWVKAIQKVMFKTQHEGETIKLIIPLEAIVDVEKSPTLEFTETIEVKCIDAEDQMSVDSYFFASFPDNDYAFSAIQKLVRERPSPPELPRISSVTTIHANQEPLDTSHATIKRHGTDSSAEKLGMASHRPFRKISSVLKPLILKSSDGEPLEEHSQGPHHNDEDASHLPHIEAISNRRRSEEESDNDYFDGYPPRQVGPPPPSMNDDARNWRPSWIRKPASKLFGSSPSGSFVSHPGRLPTDSSTTVTESGPSLRSRTGRTKQASVTEVMEPPIQYEEEVSEDEMSNKPSVVDSNSAETARKRAARLSWTSETSSGSQMVKSKSDFSMLGSESGHSESAETVRKFRTFFALSDKEELIDHFPGYLYRVLPVSGRFFISTNYFCFRSSQLLYKTKESFRLMIIPIRDLYGLKAQKAFRFGHSGLTVVIKGHEEIFIEFRSASRRKACIALLEERMEAVRLSGENTIVDSHKIEARIMEDLDESTPVEPKSPWPVSPSPLFGSTTSTSFLEFKPEPMKITCLTIGSRGDVQPYIALCKGLQAEGHITKIATHGEYKAWVEGHGIAFESVGGDPAELMQMCVDNGMFTVSFLKEGLQKFRGWLDDLLNSSWEACQGSDLLIESPSAMSGIHVAEALRIPYYRAFTMPWTRTRAYPHAFAVPEHGRGGPYNYMTYTMFDQVFWRAISGQVNRWRRNVLGLDATTFDKMEQHKVPFLYNFSPTVVPPPLDWTEWIHVTGYWFLDKADEKQGEKSWTPPQGLVDFIDKAHGEEKKVVYIGFGSIVVSDPEEMTRCVVEAVVNSGVCAILSKGWSDRGSKKGEPKGDSEGADGVKYPPEIFAIDSIDHGWLFPRIDAACHHGGAGTTGASLRAGIPTIIKPFFGDQAFWAERVESLNVGSSIRRLTSHQLASALIKATTDEKQISKARVVGEMIRKENGITRAIEAIYRDLEYAKSIIKSLPSTDDRTPERISSHLHPLTTADLSFNRVRSRSRSRSRSSQGRFSPRRHTVDDDGWSVVSGGSRSRSGSASAVTSPERRPLNIGSALGSHVFKTALLPNTFGKWRNLEEGDDR.

Residues 1 to 18 show a composition bias toward pro residues; it reads MSPPISPTPPPLQPPFPP. Disordered stretches follow at residues 1-154, 177-225, and 249-279; these read MSPP…CDFR, PWEE…PTHT, and YQYA…LPKG. Composition is skewed to polar residues over residues 65-77, 105-123, and 132-148; these read DQAT…SLIP, DAQT…STHE, and PRTS…QMAE. Positions 178 to 194 are enriched in acidic residues; it reads WEEDDDSDDGEDDDEFI. Residues 255–273 are compositionally biased toward low complexity; sequence ETSSRRTSAAGSESSSEGE. The GRAM 1 domain maps to 387–555; that stretch reads ERLMEVFGLE…EAIVDVEKSP (169 aa). In terms of domain architecture, PH spans 438–530; that stretch reads LLVKSGPLHK…WVKAIQKVMF (93 aa). Disordered stretches follow at residues 625–645 and 666–852; these read TSHA…LGMA and DGEP…GSES. Residues 670–689 show a composition bias toward basic and acidic residues; the sequence is LEEHSQGPHHNDEDASHLPH. Composition is skewed to polar residues over residues 760–785, 806–817, and 827–840; these read TDSS…QASV, NKPSVVDSNSAE, and SWTS…QMVK. Positions 862–933 constitute a GRAM 2 domain; sequence RKFRTFFALS…RDLYGLKAQK (72 aa). UDP-alpha-D-glucose contacts are provided by Ser-1043, Arg-1044, Asp-1046, Ile-1358, His-1360, His-1373, Gly-1377, Thr-1378, Asp-1397, and Gln-1398. Residues 1499–1555 are disordered; it reads NRVRSRSRSRSRSSQGRFSPRRHTVDDDGWSVVSGGSRSRSGSASAVTSPERRPLNI. Residues 1529 to 1545 are compositionally biased toward low complexity; that stretch reads SVVSGGSRSRSGSASAV.

The protein belongs to the glycosyltransferase 28 family.

It localises to the cytoplasm. The protein localises to the membrane. The enzyme catalyses a sterol + UDP-alpha-D-glucose = a sterol 3-beta-D-glucoside + UDP + H(+). The catalysed reaction is ergosterol + UDP-alpha-D-glucose = ergosteryl 3-beta-D-glucoside + UDP + H(+). Its function is as follows. Sterol glycosyltransferase responsible for the glycosylation of ergosterol to form ergosterol-glucoside. This Cryptococcus neoformans var. neoformans serotype D (strain JEC21 / ATCC MYA-565) (Filobasidiella neoformans) protein is Sterol 3-beta-glucosyltransferase.